The sequence spans 122 residues: Large ribosomal subunit protein uL14 (122 aa).

This sequence belongs to the universal ribosomal protein uL14 family. In terms of assembly, part of the 50S ribosomal subunit. Forms a cluster with proteins L3 and L19. In the 70S ribosome, L14 and L19 interact and together make contacts with the 16S rRNA in bridges B5 and B8.

Its function is as follows. Binds to 23S rRNA. Forms part of two intersubunit bridges in the 70S ribosome. In Acaryochloris marina (strain MBIC 11017), this protein is Large ribosomal subunit protein uL14.